Reading from the N-terminus, the 1131-residue chain is Probable secreted beta-glucosidase adg3 (1131 aa).

The signal sequence occupies residues 1 to 23 (MPSKIEKICLLLLGFTAASNVNA). N-linked (GlcNAc...) asparagine glycans are attached at residues asparagine 58, asparagine 123, asparagine 252, asparagine 551, asparagine 593, asparagine 631, and asparagine 689. Residues 609-819 (GTTSSTSEIV…SSPISSNSVT (211 aa)) are disordered. Residues 623–715 (SNSNTGSLNG…YSDPTTTITS (93 aa)) show a composition bias toward low complexity. Polar residues predominate over residues 716 to 725 (EVSSILSSPT). Positions 726-737 (SMQSSVSRPQSS) are enriched in low complexity. Polar residues predominate over residues 738 to 763 (GDASGFNTIFTSISQSSDGETSGYTI). Composition is skewed to low complexity over residues 764 to 773 (SSNSSQNSAS) and 780 to 819 (TSSS…NSVT). 3 N-linked (GlcNAc...) asparagine glycosylation sites follow: asparagine 766, asparagine 806, and asparagine 857. The span at 893-909 (STSNSGSTSYSIPSSSS) shows a compositional bias: low complexity. The tract at residues 893-918 (STSNSGSTSYSIPSSSSRNEGTTSYS) is disordered. An N-linked (GlcNAc...) asparagine glycan is attached at asparagine 920. Residues 977-1027 (LTVKPESSLSSSTTSGLTSSSSTIPSSTRSESNSESASTSSASKRSSSSTS) show a composition bias toward low complexity. A disordered region spans residues 977–1031 (LTVKPESSLSSSTTSGLTSSSSTIPSSTRSESNSESASTSSASKRSSSSTSLVQS).

The protein belongs to the SUN family.

It localises to the secreted. Cell surface beta-glucosidase involved in cell wall biogenesis,. In Schizosaccharomyces pombe (strain 972 / ATCC 24843) (Fission yeast), this protein is Probable secreted beta-glucosidase adg3 (adg3).